A 199-amino-acid chain; its full sequence is Chaperone protein TorD (199 aa).

The protein belongs to the TorD/DmsD family. TorD subfamily.

It is found in the cytoplasm. Involved in the biogenesis of TorA. Acts on TorA before the insertion of the molybdenum cofactor and, as a result, probably favors a conformation of the apoenzyme that is competent for acquiring the cofactor. The polypeptide is Chaperone protein TorD (Escherichia coli O7:K1 (strain IAI39 / ExPEC)).